The following is a 128-amino-acid chain: Large ribosomal subunit protein bL19 (128 aa).

The protein belongs to the bacterial ribosomal protein bL19 family.

Its function is as follows. This protein is located at the 30S-50S ribosomal subunit interface and may play a role in the structure and function of the aminoacyl-tRNA binding site. In Caldicellulosiruptor bescii (strain ATCC BAA-1888 / DSM 6725 / KCTC 15123 / Z-1320) (Anaerocellum thermophilum), this protein is Large ribosomal subunit protein bL19.